A 188-amino-acid chain; its full sequence is Protein ORFV073 (188 aa).

As to quaternary structure, interacts with host IKBKG; this interaction inhibits host NF-kappa-B pathway activation.

It localises to the host nucleus. Its subcellular location is the host cytoplasm. It is found in the host perinuclear region. The protein resides in the virion. Plays a role in the inhibition of the host NF-kappa-B pathway early during infection. Prevents the host RELA subunit from reaching the nucleus and activate transcription. The chain is Protein ORFV073 from Capra hircus (Goat).